The chain runs to 149 residues: Large ribosomal subunit protein eL24B (149 aa).

Residue serine 50 is modified to Phosphoserine. Positions 96-149 (QRPEVRAAARAAALKQRKDKRAASESEKKAIKAKSAASSARGQAIKNAKVAARR) are disordered. Positions 116–125 (RAASESEKKA) are enriched in basic and acidic residues.

This sequence belongs to the eukaryotic ribosomal protein eL24 family. As to quaternary structure, component of the large ribosomal subunit (LSU). Mature yeast ribosomes consist of a small (40S) and a large (60S) subunit. The 40S small subunit contains 1 molecule of ribosomal RNA (18S rRNA) and at least 33 different proteins. The large 60S subunit contains 3 rRNA molecules (25S, 5.8S and 5S rRNA) and at least 46 different proteins.

It localises to the cytoplasm. In terms of biological role, component of the ribosome, a large ribonucleoprotein complex responsible for the synthesis of proteins in the cell. The small ribosomal subunit (SSU) binds messenger RNAs (mRNAs) and translates the encoded message by selecting cognate aminoacyl-transfer RNA (tRNA) molecules. The large subunit (LSU) contains the ribosomal catalytic site termed the peptidyl transferase center (PTC), which catalyzes the formation of peptide bonds, thereby polymerizing the amino acids delivered by tRNAs into a polypeptide chain. The nascent polypeptides leave the ribosome through a tunnel in the LSU and interact with protein factors that function in enzymatic processing, targeting, and the membrane insertion of nascent chains at the exit of the ribosomal tunnel. The sequence is that of Large ribosomal subunit protein eL24B (rpl2402) from Schizosaccharomyces pombe (strain 972 / ATCC 24843) (Fission yeast).